Here is a 197-residue protein sequence, read N- to C-terminus: MSERIAEVSRDTLETQIRVRINLDGQGKGQFDTGLPFLDHMLDQVARHGVVDLEIVAKGDLHIDAHHTVEDIGITLGQAMARALGDKKGIRRYGHAYVPLDEALSRVVVDFSGRPGLEYHVDYPRARIGDFDVDLFGEFFQGFVNHAAVTLHIDNLRGRNAHHVAETIFKAFGRALRMAAEPDPRMQGTTPSTKGSL.

Belongs to the imidazoleglycerol-phosphate dehydratase family.

The protein localises to the cytoplasm. The catalysed reaction is D-erythro-1-(imidazol-4-yl)glycerol 3-phosphate = 3-(imidazol-4-yl)-2-oxopropyl phosphate + H2O. It functions in the pathway amino-acid biosynthesis; L-histidine biosynthesis; L-histidine from 5-phospho-alpha-D-ribose 1-diphosphate: step 6/9. This Thioalkalivibrio sulfidiphilus (strain HL-EbGR7) protein is Imidazoleglycerol-phosphate dehydratase.